A 372-amino-acid polypeptide reads, in one-letter code: Cobalt-precorrin-5B C(1)-methyltransferase (372 aa).

The protein belongs to the CbiD family.

The enzyme catalyses Co-precorrin-5B + S-adenosyl-L-methionine = Co-precorrin-6A + S-adenosyl-L-homocysteine. Its pathway is cofactor biosynthesis; adenosylcobalamin biosynthesis; cob(II)yrinate a,c-diamide from sirohydrochlorin (anaerobic route): step 6/10. In terms of biological role, catalyzes the methylation of C-1 in cobalt-precorrin-5B to form cobalt-precorrin-6A. The chain is Cobalt-precorrin-5B C(1)-methyltransferase from Prochlorococcus marinus subsp. pastoris (strain CCMP1986 / NIES-2087 / MED4).